The sequence spans 302 residues: Sulfate adenylyltransferase subunit 2 (302 aa).

Residues 280–302 form a disordered region; the sequence is RQGRLIDSDQSASMEQKKRQGYF.

It belongs to the PAPS reductase family. CysD subfamily. Heterodimer composed of CysD, the smaller subunit, and CysN.

The catalysed reaction is sulfate + ATP + H(+) = adenosine 5'-phosphosulfate + diphosphate. Its pathway is sulfur metabolism; hydrogen sulfide biosynthesis; sulfite from sulfate: step 1/3. Functionally, with CysN forms the ATP sulfurylase (ATPS) that catalyzes the adenylation of sulfate producing adenosine 5'-phosphosulfate (APS) and diphosphate, the first enzymatic step in sulfur assimilation pathway. APS synthesis involves the formation of a high-energy phosphoric-sulfuric acid anhydride bond driven by GTP hydrolysis by CysN coupled to ATP hydrolysis by CysD. This is Sulfate adenylyltransferase subunit 2 from Shewanella frigidimarina (strain NCIMB 400).